The following is a 702-amino-acid chain: Polyribonucleotide nucleotidyltransferase 2 (702 aa).

Residues Asp-483 and Asp-489 each coordinate Mg(2+). Residues 550–609 (PQVTKLKVHPDKVREVIGAGGKVINKIIDETGVKINIENDGTIYIAAPDQESARVALEMI) form the KH domain. Residues 619 to 687 (GEVYTGKVIK…PQGKIGLSRK (69 aa)) form the S1 motif domain.

The protein belongs to the polyribonucleotide nucleotidyltransferase family. Mg(2+) is required as a cofactor.

It localises to the cytoplasm. The catalysed reaction is RNA(n+1) + phosphate = RNA(n) + a ribonucleoside 5'-diphosphate. Its function is as follows. Involved in mRNA degradation. Catalyzes the phosphorolysis of single-stranded polyribonucleotides processively in the 3'- to 5'-direction. The protein is Polyribonucleotide nucleotidyltransferase 2 of Alkaliphilus metalliredigens (strain QYMF).